Consider the following 126-residue polypeptide: Thiocyanate hydrolase subunit alpha (126 aa).

As to quaternary structure, heterododecamer consisting of 4 alpha, 4 beta, and 4 gamma subunits.

The catalysed reaction is thiocyanate + H2O + 2 H(+) = carbonyl sulfide + NH4(+). Its pathway is organosulfur degradation; thiocyanate degradation. Functionally, involved in the degradation of thiocyanate. This Thiobacillus thioparus protein is Thiocyanate hydrolase subunit alpha (scnA).